We begin with the raw amino-acid sequence, 287 residues long: Protease HtpX (287 aa).

A run of 2 helical transmembrane segments spans residues 4–24 (IFLLIATNLAVLLVASIVMSI) and 33–53 (GGLLVFAAIFGFGGAFISLAI). Histidine 139 contributes to the Zn(2+) binding site. The active site involves glutamate 140. Histidine 143 provides a ligand contact to Zn(2+). Transmembrane regions (helical) follow at residues 154-174 (LIQGVVNTFVIFAARVVAGII) and 195-215 (AVVFVLDMLFGILASIIVAYF). Glutamate 220 is a binding site for Zn(2+).

It belongs to the peptidase M48B family. Requires Zn(2+) as cofactor.

Its subcellular location is the cell inner membrane. This is Protease HtpX from Shewanella sp. (strain MR-4).